A 218-amino-acid chain; its full sequence is Sodium channel regulatory subunit beta-1 (218 aa).

Positions 1–18 (MGTLLALVVGAALVSSAW) are cleaved as a signal peptide. Residues 19 to 157 (GGCVEVDSET…DKANRDMASI (139 aa)) lie on the Extracellular side of the membrane. Intrachain disulfides connect cysteine 21/cysteine 43 and cysteine 40/cysteine 121. An Ig-like C2-type domain is found at 22–150 (VEVDSETEAV…KIHIEVVDKA (129 aa)). N-linked (GlcNAc...) asparagine glycosylation is found at asparagine 93, asparagine 110, asparagine 114, and asparagine 135. The chain crosses the membrane as a helical span at residues 158–179 (VSEIMMYVLIVVLTIWLVAEMV). Topologically, residues 180 to 218 (YCYKKIAAATEAAAQENASEYLAITSESKENCTGVQVAE) are cytoplasmic.

The protein belongs to the sodium channel auxiliary subunit SCN1B (TC 8.A.17) family. As to quaternary structure, a voltage-gated sodium (Nav) channel consists of an ion-conducting pore-forming alpha subunit functional on its own that is regulated by one or more beta subunits. Interacts with SCN1A; regulatory subunit of SCN1A/Nav1.1. Interacts with SCN3A; regulatory subunit of SCN3A/Nav1.3. Interacts with SCN4A; regulatory subunit of SCN4A/Nav1.4. Interacts with SCN5A; regulatory subunit of SCN5A/Nav1.5. Interacts with SCN8A; regulatory subunit of SCN8A/Nav1.6. Interacts with SCN9A; regulatory subunit of SCN9A/Nav1.7. Interacts with SCN10A; regulatory subunit of SCN10A/Nav1.8. Interacts with NFASC. Interacts with TMEM65.

It is found in the cell membrane. It localises to the perikaryon. Its subcellular location is the cell projection. The protein resides in the axon. Regulatory subunit of multiple voltage-gated sodium (Nav) channels directly mediating the depolarization of excitable membranes. Navs, also called VGSCs (voltage-gated sodium channels) or VDSCs (voltage-dependent sodium channels), operate by switching between closed and open conformations depending on the voltage difference across the membrane. In the open conformation they allow Na(+) ions to selectively pass through the pore, along their electrochemical gradient. The influx of Na+ ions provokes membrane depolarization, initiating the propagation of electrical signals throughout cells and tissues. The accessory beta subunits participate in localization and functional modulation of the Nav channels. Modulates the activity of SCN1A/Nav1.1, SCN2A/Nav1.2, SCN3A/Nav1.3, SCN4A/Nav1.4, SCN5A/Nav1.5, SCN8A/Nav1.6, SCN9A/Nav1.7 and SCN10A/Nav1.8. This chain is Sodium channel regulatory subunit beta-1, found in Canis lupus familiaris (Dog).